Here is a 302-residue protein sequence, read N- to C-terminus: Sulfate adenylyltransferase subunit 2 (302 aa).

It belongs to the PAPS reductase family. CysD subfamily. As to quaternary structure, heterodimer composed of CysD, the smaller subunit, and CysN.

It carries out the reaction sulfate + ATP + H(+) = adenosine 5'-phosphosulfate + diphosphate. The protein operates within sulfur metabolism; hydrogen sulfide biosynthesis; sulfite from sulfate: step 1/3. In terms of biological role, with CysN forms the ATP sulfurylase (ATPS) that catalyzes the adenylation of sulfate producing adenosine 5'-phosphosulfate (APS) and diphosphate, the first enzymatic step in sulfur assimilation pathway. APS synthesis involves the formation of a high-energy phosphoric-sulfuric acid anhydride bond driven by GTP hydrolysis by CysN coupled to ATP hydrolysis by CysD. The chain is Sulfate adenylyltransferase subunit 2 from Sodalis glossinidius (strain morsitans).